We begin with the raw amino-acid sequence, 197 residues long: Lipoprotein signal peptidase (197 aa).

2 consecutive transmembrane segments (helical) span residues 73 to 93 and 97 to 117; these read SNAIFLITNTLIVCYLYYLMI and TIGSFAGYSFVIGGAVGNLID. Residues aspartate 126 and aspartate 144 contribute to the active site. The helical transmembrane segment at 135-155 threads the bilayer; sequence YSFPVFNLADCFITIGVIILI.

Belongs to the peptidase A8 family.

It localises to the cell inner membrane. It carries out the reaction Release of signal peptides from bacterial membrane prolipoproteins. Hydrolyzes -Xaa-Yaa-Zaa-|-(S,diacylglyceryl)Cys-, in which Xaa is hydrophobic (preferably Leu), and Yaa (Ala or Ser) and Zaa (Gly or Ala) have small, neutral side chains.. It functions in the pathway protein modification; lipoprotein biosynthesis (signal peptide cleavage). This protein specifically catalyzes the removal of signal peptides from prolipoproteins. The chain is Lipoprotein signal peptidase from Rickettsia felis (strain ATCC VR-1525 / URRWXCal2) (Rickettsia azadi).